The chain runs to 398 residues: Phosphoglycerate kinase (398 aa).

Residues 23–25 (DLN), R38, 61–64 (HFGR), R120, and R153 each bind substrate. Residues K203, E325, and 355 to 358 (GGDT) each bind ATP.

The protein belongs to the phosphoglycerate kinase family. As to quaternary structure, monomer.

The protein resides in the cytoplasm. The catalysed reaction is (2R)-3-phosphoglycerate + ATP = (2R)-3-phospho-glyceroyl phosphate + ADP. The protein operates within carbohydrate degradation; glycolysis; pyruvate from D-glyceraldehyde 3-phosphate: step 2/5. This is Phosphoglycerate kinase from Chelativorans sp. (strain BNC1).